A 547-amino-acid chain; its full sequence is Collagen EMF1-alpha (547 aa).

Disordered stretches follow at residues 1 to 99 and 116 to 311; these read GVPG…APGV and GPDG…GGGI. A triple-helical region region spans residues 1–280; it reads GVPGPNGDVG…QGPRGGQGPK (280 aa). 2 stretches are compositionally biased toward low complexity: residues 27 to 69 and 160 to 175; these read QGPD…IRGQ and QGSK…VGPQ. An Allysine modification is found at Lys-187. Residues 219–228 are compositionally biased toward basic and acidic residues; that stretch reads VKGEKGEVGD. Low complexity predominate over residues 246 to 271; sequence DAGPAGPIGDAGIQGPPGQDGPTGAQ. Positions 272 to 281 are enriched in gly residues; the sequence is GPRGGQGPKG. Residues 308-336 are telopeptide; it reads GGGIILVPVNDQNPTRSPVSGSVFYRGQA. Residues 337 to 547 constitute a propeptide, C-terminal propeptide; it reads EETDVNLGSV…GFEMGPACFY (211 aa). Residues 343–547 form the Fibrillar collagen NC1 domain; the sequence is LGSVADVIEL…GFEMGPACFY (205 aa). N-linked (GlcNAc...) asparagine glycosylation is found at Asn-381 and Asn-406.

It belongs to the fibrillar collagen family.

Its subcellular location is the secreted. The protein resides in the extracellular space. It is found in the extracellular matrix. In Ephydatia muelleri (Mueller's freshwater sponge), this protein is Collagen EMF1-alpha (COLF1).